The primary structure comprises 270 residues: Probable inner membrane protein BTH_II0599 (270 aa).

Transmembrane regions (helical) follow at residues 24 to 44 (RNPLAFVTLFFTYLLAMMLVS), 45 to 65 (LVPVIGAALPLLLIPGIAVGF), 98 to 118 (LLTLGGLYIVSMAAVFACSAL), 150 to 170 (ALIAAALYAPVAMMFWFAPVL), 198 to 218 (VYGLLWFALALGVSFGLAALM), and 226 to 246 (YALMVMMPASIVITAMLYCSF).

It is found in the cell inner membrane. In terms of biological role, (Microbial infection) Probably transports the toxic C-terminal region of CdiA-2 from B.pseudomallei strain 1026b across the inner membrane to the cytoplasm, where CdiA has a toxic effect. Expression in E.coli makes the bacteria sensitive to the tRNase domain of B.pseudomallei strain 1026b CdiA-2. The sequence is that of Probable inner membrane protein BTH_II0599 from Burkholderia thailandensis (strain ATCC 700388 / DSM 13276 / CCUG 48851 / CIP 106301 / E264).